A 184-amino-acid chain; its full sequence is Probable RNA 2'-phosphotransferase (184 aa).

This sequence belongs to the KptA/TPT1 family.

Removes the 2'-phosphate from RNA via an intermediate in which the phosphate is ADP-ribosylated by NAD followed by a presumed transesterification to release the RNA and generate ADP-ribose 1''-2''-cyclic phosphate (APPR&gt;P). May function as an ADP-ribosylase. The chain is Probable RNA 2'-phosphotransferase from Burkholderia pseudomallei (strain K96243).